Consider the following 315-residue polypeptide: Cobalamin biosynthesis protein CobD (315 aa).

Transmembrane regions (helical) follow at residues 48–70, 75–94, 148–170, 208–230, and 292–314; these read IAGI…LSVQ, LHWI…TIAI, LVDG…AMLY, ITSY…SLYI, and LILL…AAYF.

It belongs to the CobD/CbiB family.

The protein resides in the cell membrane. Its pathway is cofactor biosynthesis; adenosylcobalamin biosynthesis. Converts cobyric acid to cobinamide by the addition of aminopropanol on the F carboxylic group. The protein is Cobalamin biosynthesis protein CobD of Leptospira interrogans serogroup Icterohaemorrhagiae serovar copenhageni (strain Fiocruz L1-130).